Consider the following 535-residue polypeptide: tRNA-2-methylthio-N(6)-dimethylallyladenosine synthase (535 aa).

The region spanning 24–139 (RTYEVRTFGC…LPRLLERARH (116 aa)) is the MTTase N-terminal domain. Residues cysteine 33, cysteine 68, cysteine 102, cysteine 176, cysteine 180, and cysteine 183 each contribute to the [4Fe-4S] cluster site. Positions 162–392 (RDSSFSGWVS…IALQERISLE (231 aa)) constitute a Radical SAM core domain. One can recognise a TRAM domain in the interval 395-465 (EKLIGRDVEL…PHYLIADAAG (71 aa)). The disordered stretch occupies residues 512–535 (RTREPLTSPGVGTMPLYDPTDGQR).

The protein belongs to the methylthiotransferase family. MiaB subfamily. As to quaternary structure, monomer. [4Fe-4S] cluster serves as cofactor.

The protein resides in the cytoplasm. The catalysed reaction is N(6)-dimethylallyladenosine(37) in tRNA + (sulfur carrier)-SH + AH2 + 2 S-adenosyl-L-methionine = 2-methylsulfanyl-N(6)-dimethylallyladenosine(37) in tRNA + (sulfur carrier)-H + 5'-deoxyadenosine + L-methionine + A + S-adenosyl-L-homocysteine + 2 H(+). Catalyzes the methylthiolation of N6-(dimethylallyl)adenosine (i(6)A), leading to the formation of 2-methylthio-N6-(dimethylallyl)adenosine (ms(2)i(6)A) at position 37 in tRNAs that read codons beginning with uridine. The chain is tRNA-2-methylthio-N(6)-dimethylallyladenosine synthase from Leifsonia xyli subsp. xyli (strain CTCB07).